A 217-amino-acid polypeptide reads, in one-letter code: Ubiquitin-conjugating enzyme E2 1 (217 aa).

One can recognise a UBC core domain in the interval 4–151 (NRSRRIAKEL…AREWTSSYAA (148 aa)). The active-site Glycyl thioester intermediate is the C89.

It belongs to the ubiquitin-conjugating enzyme family.

It is found in the cytoplasm. It localises to the nucleus. It catalyses the reaction S-ubiquitinyl-[E1 ubiquitin-activating enzyme]-L-cysteine + [E2 ubiquitin-conjugating enzyme]-L-cysteine = [E1 ubiquitin-activating enzyme]-L-cysteine + S-ubiquitinyl-[E2 ubiquitin-conjugating enzyme]-L-cysteine.. The protein operates within protein modification; protein ubiquitination. Its function is as follows. Catalyzes the covalent attachment of ubiquitin to other proteins. Functions in degradation of misfolded or regulated proteins localized in the endoplasmic reticulum (ER) lumen or membrane via the ubiquitin-proteasome system. Cognate E2 conjugating enzyme for the HRD1 ubiquitin ligase complex, which is part of the ERAD-L and ERAD-M pathways responsible for the rapid degradation of soluble lumenal and membrane proteins with misfolded lumenal domains (ERAD-L), or ER-membrane proteins with misfolded transmembrane domains (ERAD-M). The protein is Ubiquitin-conjugating enzyme E2 1 (ubc1) of Schizosaccharomyces pombe (strain 972 / ATCC 24843) (Fission yeast).